The primary structure comprises 238 residues: MDAVNFSILAPRYGSHPMMSAWSGIGTSDMNGGAFNWGGIWSGIKNFGSNVKNWGSRAWNSQTGKLLRQKLNDTKVREKLVEGISTGVHGALDIANQEIAKQIERRLERHEPLEPEVEEETVETKSEAKAPLVVEMPLKRPRDEDLVITADEPPSYEETIKTMAPLVPMTRPHPSMARPVIADRPTTLELKPSDQPPPYSPQSSNMPVTAPVRSRGWQGTLANIVGVGLSNVKRRRCF.

A propeptide spanning residues 1 to 33 (MDAVNFSILAPRYGSHPMMSAWSGIGTSDMNGG) is cleaved from the precursor. An amphipathic alpha-helix essential for membrane lytic activity region spans residues 34–54 (AFNWGGIWSGIKNFGSNVKNW). The involved in endosomal membrane lysis stretch occupies residues 36-53 (NWGGIWSGIKNFGSNVKN). The segment at 48–74 (GSNVKNWGSRAWNSQTGKLLRQKLNDT) is interaction with hexon protein. The Nuclear export signal signature appears at 67–76 (LRQKLNDTKV). Residues 153-156 (PPSY) carry the PPXY motif motif. A disordered region spans residues 187 to 212 (TLELKPSDQPPPYSPQSSNMPVTAPV). Residues 219-230 (GTLANIVGVGLS) carry the Nuclear export signal motif. Positions 221–227 (LANIVGV) are interaction with hexon protein. A binds to importin alpha/beta, involved in hexon nuclear import region spans residues 228 to 238 (GLSNVKRRRCF). The Nuclear localization signal signature appears at 233–236 (KRRR).

Belongs to the adenoviridae protein VI family. Interacts with hexon protein; this interaction allows nuclear import of hexon trimers and possibly pre-capsid assembly. Interacts (via C-terminal NLS) with importin alpha/beta. As to quaternary structure, interacts (via PPxY motif) with host NEDD4 ubiquitine ligase; this interaction might play a role in virus intracellular transport during entry. Part of a complex composed of the core-capsid bridging protein, the endosome lysis protein VI and the hexon-linking protein VIII; these interactions bridge the virus core to the capsid. Interacts with peripentonal hexons; this interaction stabilizes the capsid by gluing two peripentonal hexons together and joining them with an adjacent group-of-nine hexon. In terms of assembly, heterodimer with the viral protease; disulfide-linked. Interacts with the viral protease. In terms of processing, ubiquitinated by Nedd4 following partial capsid disassembly; which might play a role in intracellular virus movement during entry. Contains the major nuclear import and export signals. Proteolytically removed during virion maturation. The processing of the C-terminus turns the precursor into a mature viral structural protein and abrogates its ability to promote hexon import and act as a potential chaperone protein.

It localises to the host nucleus. Its subcellular location is the host cytoplasm. The protein resides in the virion. During virus assembly, promotes hexon trimers nuclear import through nuclear pore complexes via an importin alpha/beta-dependent mechanism. By analogy to herpesviruses capsid assembly, might act as a chaperone to promote the formation of the icosahedral capsid. Its function is as follows. Structural component of the virion that provides increased stability to the particle shell through its interaction with the core-capsid bridging protein and the hexon-linking protein VIII. Fibers shedding during virus entry into host cell allows the endosome lysis protein to be exposed as a membrane-lytic peptide. Exhibits pH-independent membrane fragmentation activity and probably mediates viral rapid escape from host endosome via organellar membrane lysis. It is not clear if it then remains partially associated with the capsid and involved in the intracellular microtubule-dependent transport of capsid to the nucleus, or if it is lost during endosomal penetration. Functionally, cofactor that activates the viral protease. Binds to viral protease in a 1:1 ratio. This is Pre-protein VI from Canine adenovirus serotype 1 (strain CLL) (CAdV-1).